The sequence spans 81 residues: Teretoxin Tsu6.8 (81 aa).

An N-terminal signal peptide occupies residues 1–21 (MATSGRLLCLCLVLGLIFESL). The propeptide occupies 22–45 (GHPVMGEKRAGENASPSARSLPKR).

This sequence belongs to the teretoxin M (TM) superfamily. In terms of processing, contains 3 disulfide bonds. In terms of tissue distribution, expressed by the venom duct.

Its subcellular location is the secreted. The polypeptide is Teretoxin Tsu6.8 (Terebra subulata (Chocolate spotted auger)).